The chain runs to 109 residues: Iron-sulfur cluster assembly protein CyaY (109 aa).

It belongs to the frataxin family.

In terms of biological role, involved in iron-sulfur (Fe-S) cluster assembly. May act as a regulator of Fe-S biogenesis. This chain is Iron-sulfur cluster assembly protein CyaY, found in Acidovorax ebreus (strain TPSY) (Diaphorobacter sp. (strain TPSY)).